The chain runs to 292 residues: Quinolinate synthase (292 aa).

Iminosuccinate is bound by residues H8 and S25. Position 70 (C70) interacts with [4Fe-4S] cluster. Iminosuccinate-binding positions include 96–98 (YVN) and S113. A [4Fe-4S] cluster-binding site is contributed by C158. Iminosuccinate contacts are provided by residues 184-186 (HPE) and T201. A [4Fe-4S] cluster-binding site is contributed by C244.

The protein belongs to the quinolinate synthase family. Type 2 subfamily. The cofactor is [4Fe-4S] cluster.

It is found in the cytoplasm. The enzyme catalyses iminosuccinate + dihydroxyacetone phosphate = quinolinate + phosphate + 2 H2O + H(+). Its pathway is cofactor biosynthesis; NAD(+) biosynthesis; quinolinate from iminoaspartate: step 1/1. Functionally, catalyzes the condensation of iminoaspartate with dihydroxyacetone phosphate to form quinolinate. This chain is Quinolinate synthase (nadA), found in Methanopyrus kandleri (strain AV19 / DSM 6324 / JCM 9639 / NBRC 100938).